The sequence spans 260 residues: Thrombin-like enzyme bhalternin (260 aa).

The first 18 residues, 1–18, serve as a signal peptide directing secretion; sequence MVLIRVLANLLILQLSYA. A propeptide spanning residues 19–24 is cleaved from the precursor; the sequence is QKASEL. Residues 25–251 form the Peptidase S1 domain; sequence VIGGDECNIN…YSEWIQSIIA (227 aa). 5 disulfide bridges follow: Cys31-Cys165, Cys50-Cys66, Cys144-Cys212, Cys176-Cys191, and Cys202-Cys227. N-linked (GlcNAc...) asparagine glycosylation occurs at Asn44. Asn81 carries N-linked (GlcNAc...) asparagine glycosylation.

This sequence belongs to the peptidase S1 family. Snake venom subfamily. In terms of assembly, monomer. Expressed by the venom gland.

It localises to the secreted. Inhibited by benzamidine and partially inhibited by EDTA. Functionally, thrombin-like snake venom serine protease that induces blood clotting in vitro, defibrinogenation in vivo (by intraperitoneal injection into mice), albuminolytic and fibrinogenolytic activities. Preferentially cleaves the alpha chain of fibrinogen (FGA). Causes hemolysis in the heart, causes apparent hyperemia and lymphocytic interstitial pneumonitis in the lung, causes necrosis and inflammatory infiltrate in the liver, and causes glomerular congestion in the kidney. Also provokes a drastic myonecrosis. This chain is Thrombin-like enzyme bhalternin, found in Bothrops alternatus (Urutu).